The primary structure comprises 247 residues: ATP synthase subunit a, chloroplastic (247 aa).

5 helical membrane passes run 38-58 (QVLITSWVVITILLGSVVIAV), 95-115 (VPFIGTMFLFIFVSNWSGALL), 134-154 (INTTVALALLTSAAYFYAGLS), 199-219 (LVVVVLVSLVPLVVPIPVMFL), and 220-240 (GLFTSGIQALIFATLAAAYIG).

It belongs to the ATPase A chain family. As to quaternary structure, F-type ATPases have 2 components, CF(1) - the catalytic core - and CF(0) - the membrane proton channel. CF(1) has five subunits: alpha(3), beta(3), gamma(1), delta(1), epsilon(1). CF(0) has four main subunits: a, b, b' and c.

It localises to the plastid. The protein resides in the chloroplast thylakoid membrane. Its function is as follows. Key component of the proton channel; it plays a direct role in the translocation of protons across the membrane. The chain is ATP synthase subunit a, chloroplastic from Lolium perenne (Perennial ryegrass).